An 861-amino-acid chain; its full sequence is APC membrane recruitment protein 3 (861 aa).

Disordered regions lie at residues 1–77 (MELK…PKGG), 179–206 (AEGK…PPGE), 261–289 (PSLE…GPLQ), 351–415 (PLCP…FPRD), 514–558 (RGPT…GGAT), 576–644 (GLLA…SQKE), 716–742 (MLEQ…STQD), and 786–822 (AHGS…SQQE). Residues 362 to 384 (SKASSIDTGTPKSEQPESVSTSD) are compositionally biased toward polar residues. Over residues 518-530 (PRAPPTPGQPAAP) the composition is skewed to pro residues. Low complexity predominate over residues 584 to 595 (ALGGATQGTGTL). The span at 598-609 (DASREEETRGHS) shows a compositional bias: basic and acidic residues. Polar residues-rich tracts occupy residues 615–629 (SMES…TSGK) and 719–730 (QKQSSSSPSMTT).

It belongs to the Amer family.

The protein resides in the cell membrane. Regulator of the canonical Wnt signaling pathway. Acts by specifically binding phosphatidylinositol 4,5-bisphosphate (PtdIns(4,5)P2), translocating to the cell membrane. The protein is APC membrane recruitment protein 3 (AMER3) of Homo sapiens (Human).